Reading from the N-terminus, the 260-residue chain is Kallikrein-8 (260 aa).

An N-terminal signal peptide occupies residues 1–28 (MGRPRPRAAKTWMFLLLLGGAWAGHSRA). Positions 29–32 (QEDK) are excised as a propeptide. Residues 33 to 257 (VLGGHECQPH…YLDWIKKIIG (225 aa)) form the Peptidase S1 domain. 6 disulfides stabilise this stretch: Cys-39–Cys-173, Cys-58–Cys-74, Cys-145–Cys-246, Cys-152–Cys-218, Cys-184–Cys-198, and Cys-208–Cys-233. Catalysis depends on His-73, which acts as the Charge relay system. Asn-110 carries N-linked (GlcNAc...) asparagine glycosylation. The active-site Charge relay system is Asp-120. Catalysis depends on Ser-212, which acts as the Charge relay system.

The protein belongs to the peptidase S1 family. Kallikrein subfamily. In terms of assembly, interacts with SPINK9. Isoform 1 is predominantly expressed in the pancreas. Isoform 2 is expressed in adult brain and hippocampus. Isoform 1 and isoform 2 are found in fetal brain and placenta. Detected in salivary gland, uterus, thymus, breast, testis and kidney but not in spleen, liver, lung or normal ovarian tissue. Displays an 11.5-fold increase in Alzheimer disease hippocampus compared to controls and is overexpressed in some ovarian carcinomas. Expressed at low levels in normal skin while high levels are found in psoriasis vulgaris, seborrheic keratosis, lichen planus and squamous cell carcinoma skin samples. Expressed in the keratinocytes.

It is found in the secreted. It localises to the cytoplasm. The enzyme catalyses Cleavage of amide substrates following the basic amino acids Arg or Lys at the P1 position, with a preference for Arg over Lys.. Inhibited by a range of serine protease inhibitors including antipain, aprotinin, leupeptin, benzamidine and soybean trypsin inhibitor. Functionally, serine protease which is capable of degrading a number of proteins such as casein, fibrinogen, kininogen, fibronectin and collagen type IV. Also cleaves L1CAM in response to increased neural activity. Induces neurite outgrowth and fasciculation of cultured hippocampal neurons. Plays a role in the formation and maturation of orphan and small synaptic boutons in the Schaffer-collateral pathway, regulates Schaffer-collateral long-term potentiation in the hippocampus and is required for memory acquisition and synaptic plasticity. Involved in skin desquamation and keratinocyte proliferation. Plays a role in the secondary phase of pathogenesis following spinal cord injury. In Homo sapiens (Human), this protein is Kallikrein-8 (KLK8).